Reading from the N-terminus, the 757-residue chain is Transcription factor FBD3 (757 aa).

Positions 1-24 are disordered; the sequence is MSSKRLSQNEQEKSPGTGPPTHKR. Positions 31 to 58 form a DNA-binding region, zn(2)-C6 fungal-type; that stretch reads CNACRMRKSRCDGHRPSCSSCLSLGVNC. 2 disordered regions span residues 106-161 and 202-222; these read GGTD…DANT and VAPS…TDVP. The segment covering 111–120 has biased composition (basic and acidic residues); that stretch reads NNHHNNHDSP. The segment covering 125 to 135 has biased composition (polar residues); sequence TIAQSITSSRP.

The protein localises to the nucleus. Functionally, transcription factor; part of the Fusarium detoxification of benzoxazolinone cluster involved in the degradation of benzoxazolinones produced by the host plant. Maize, wheat, and rye produce the 2 benzoxazinone phytoanticipins 2,4-dihy-droxy-7-methoxy-1,4-benzoxazin-3-one (DIMBOA) and 2,4-dihydroxy-1,4-benzoxazin-3-one (DIBOA) that, due to their inherent instability once released, spontaneously degrade to the more stable corresponding benzoxazolinones, 6-methoxy-2-benzoxazolinone (MBOA) and 2-benzoxazolinone (BOA), respectively. FDB3 controls the transcription of the FDB gene cluster in response to 6-methoxy-2-benzoxazolinone (MBOA). The sequence is that of Transcription factor FBD3 from Fusarium pseudograminearum (strain CS3096) (Wheat and barley crown-rot fungus).